Reading from the N-terminus, the 782-residue chain is Isoamylase 3, chloroplastic (782 aa).

Residues 1–68 (MDSIGINRAP…EKVRRFDSVR (68 aa)) constitute a chloroplast transit peptide. Residues 68–81 (RSTTARAQNGNAGR) are compositionally biased toward polar residues. Residues 68–88 (RSTTARAQNGNAGRSMTEERG) are disordered. Residue D445 is the Nucleophile of the active site. Catalysis depends on E482, which acts as the Proton donor.

Belongs to the glycosyl hydrolase 13 family. Expressed in leaves. Expressed at low levels in developing endosperm.

The protein localises to the plastid. It localises to the chloroplast. The protein resides in the amyloplast. It carries out the reaction Hydrolysis of (1-&gt;6)-alpha-D-glucosidic branch linkages in glycogen, amylopectin and their beta-limit dextrins.. In terms of biological role, starch-debranching enzyme that plays a role in the degradation of transitory starch during the night in leaf blades, facilitates the formation of spherical amyloplasts containing compound granules in the endosperm, and affects morphological characteristics of plastids. In Oryza sativa subsp. japonica (Rice), this protein is Isoamylase 3, chloroplastic.